A 264-amino-acid polypeptide reads, in one-letter code: MAKISKIEAQKRKGRYNIYLDGKYAFPVAESVLIQFRLMKGTELDEKQIAAIATADQQAKAYSRMLDYLSYQMRTESDIVKKLKEIDTPEEFVESILKKLRGQQLIDDHAYAASYVRTMINTDLKGPGVIRQHLRQKGIGENDIDDALTQFTPEVQAELAKKLAEKLFRRYRNQPERRREQKVQQGLMTKGFSSSVYEMIKDEVVPQPDLEQENDLLAKEAAKQWRRVRCYQGYEREQHFKQAMYRKGFDLDDVQSWLDAQDFQ.

The protein belongs to the RecX family.

It localises to the cytoplasm. Modulates RecA activity. The polypeptide is Regulatory protein RecX (Limosilactobacillus reuteri (strain DSM 20016) (Lactobacillus reuteri)).